The following is a 176-amino-acid chain: Ribosome maturation factor RimM (176 aa).

A PRC barrel domain is found at 93-172 (KDEFFQFDII…EILVKGARDI (80 aa)).

Belongs to the RimM family. Binds ribosomal protein uS19.

It localises to the cytoplasm. In terms of biological role, an accessory protein needed during the final step in the assembly of 30S ribosomal subunit, possibly for assembly of the head region. Essential for efficient processing of 16S rRNA. May be needed both before and after RbfA during the maturation of 16S rRNA. It has affinity for free ribosomal 30S subunits but not for 70S ribosomes. The chain is Ribosome maturation factor RimM from Campylobacter concisus (strain 13826).